The chain runs to 165 residues: Neurotrophin-3 (165 aa).

A signal peptide spans 1–3; that stretch reads IQS. Residues 4 to 119 constitute a propeptide that is removed on maturation; the sequence is TSMDQGSLSE…VLNQTSRRKR (116 aa). Residue Asn112 is glycosylated (N-linked (GlcNAc...) asparagine).

This sequence belongs to the NGF-beta family.

It is found in the secreted. Its function is as follows. Seems to promote the survival of visceral and proprioceptive sensory neurons. The chain is Neurotrophin-3 (NTF3) from Aspidites melanocephalus (Black-headed python).